Consider the following 262-residue polypeptide: Protein crossbronx-like (262 aa).

In terms of domain architecture, UBC core spans 15-179 (RQGYQVLAEY…VQELALFTKK (165 aa)).

It belongs to the ubiquitin-conjugating enzyme family. FTS subfamily.

This chain is Protein crossbronx-like, found in Drosophila pseudoobscura pseudoobscura (Fruit fly).